The primary structure comprises 101 residues: uncharacterized protein (101 aa).

The signal sequence occupies residues 1–19 (MKFKYLSTPLLFSALLFSA). The N-palmitoyl cysteine moiety is linked to residue C20. Residue C20 is the site of S-diacylglycerol cysteine attachment.

This sequence belongs to the MG439/MG440 family.

It localises to the cell membrane. This is an uncharacterized protein from Mycoplasma pneumoniae (strain ATCC 29342 / M129 / Subtype 1) (Mycoplasmoides pneumoniae).